A 203-amino-acid polypeptide reads, in one-letter code: RNA annealing protein YRA2 (203 aa).

Methionine 1 is subject to N-acetylmethionine. Disordered regions lie at residues 1–60 (MDKA…REEP) and 137–203 (QPQR…YMKG). The span at 11–20 (NSHTDSSSNH) shows a compositional bias: polar residues. Over residues 47-60 (SRSKDRLYREREEP) the composition is skewed to basic and acidic residues. In terms of domain architecture, RRM spans 64 to 138 (KRIRISKIPL…AKIEVEIYQP (75 aa)). Basic residues-rich tracts occupy residues 139–153 (QRKH…RRKQ) and 163–180 (PGSH…KNKG).

This sequence belongs to the YRA1 family. In terms of assembly, associates with mRNPs. Interacts with YRA1.

Its subcellular location is the nucleus. Its function is as follows. Involved in export of poly(A) mRNAs from the nucleus. Recruited to the coding sequences as well as poly-A sites of active genes. This is RNA annealing protein YRA2 (YRA2) from Saccharomyces cerevisiae (strain Lalvin EC1118 / Prise de mousse) (Baker's yeast).